The chain runs to 189 residues: RNA-binding protein (189 aa).

The C4-type zinc-finger motif lies at 55–69; it reads CICPSSNHLVDDCVC. The tract at residues 114–189 is disordered; the sequence is FLTSVNPGES…DANTRKSKRK (76 aa). Basic and acidic residues predominate over residues 158–167; sequence SSSERKRKEY. Residues 168-180 are compositionally biased toward low complexity; sequence SSNSETDLSSDSD.

The protein belongs to the phytoreovirus RNA-binding protein family.

The protein localises to the host cytoplasm. In terms of biological role, constituent of viral factories. Binds to ssRNA and dsRNA. The polypeptide is RNA-binding protein (Alopecurus aequalis (Barnyard grass)).